Consider the following 130-residue polypeptide: Glycine cleavage system H protein (130 aa).

Residues 24–106 (SVTVGITEHA…YGDGWIMRIQ (83 aa)) enclose the Lipoyl-binding domain. Lys-65 carries the N6-lipoyllysine modification.

It belongs to the GcvH family. The glycine cleavage system is composed of four proteins: P, T, L and H. (R)-lipoate is required as a cofactor.

The glycine cleavage system catalyzes the degradation of glycine. The H protein shuttles the methylamine group of glycine from the P protein to the T protein. The chain is Glycine cleavage system H protein from Halorhodospira halophila (strain DSM 244 / SL1) (Ectothiorhodospira halophila (strain DSM 244 / SL1)).